Reading from the N-terminus, the 144-residue chain is Aklanonic acid methyl ester cyclase AcmA (144 aa).

Asn-51 and Gln-105 together coordinate substrate.

It belongs to the polyketide cyclase DnrD family. Homotetramer.

It carries out the reaction methyl aklanonate = aklaviketone. It participates in antibiotic biosynthesis; daunorubicin biosynthesis. The protein operates within antibiotic biosynthesis; carminomycin biosynthesis. It functions in the pathway antibiotic biosynthesis; rhodomycin biosynthesis. Its pathway is antibiotic biosynthesis; aclacinomycin biosynthesis. Its function is as follows. Involved in the biosynthesis of aklavinone which is an important precursor common to the formation of the clinically significant anthracyclines such as carminomycin, daunorubicin (daunomycin), rhodomycin, aclacinomycin T (aklavin) and aclacinomycin A (aclarubicin). These compounds are aromatic polyketide antibiotics that exhibit high cytotoxicity and are widely applied in the chemotherapy of a variety of cancers. Catalyzes the cyclization of aklanonic acid methyl ester to yield aklaviketone. It is also able to use nogalonic acid methyl ester as substrate, but produces exclusively auraviketone with C9-R stereochemistry. The chain is Aklanonic acid methyl ester cyclase AcmA (acma) from Streptomyces galilaeus.